A 505-amino-acid chain; its full sequence is tRNA-2-methylthio-N(6)-dimethylallyladenosine synthase (505 aa).

An MTTase N-terminal domain is found at 10 to 126; the sequence is RSYEVRTYGC…LPALLDRARH (117 aa). 6 residues coordinate [4Fe-4S] cluster: C19, C55, C89, C163, C167, and C170. The Radical SAM core domain maps to 149–385; that stretch reads RESAYAGWVS…IALQEQITLE (237 aa). In terms of domain architecture, TRAM spans 388-459; the sequence is QKLVGAEVEL…PHHLVADTPV (72 aa).

Belongs to the methylthiotransferase family. MiaB subfamily. In terms of assembly, monomer. The cofactor is [4Fe-4S] cluster.

The protein resides in the cytoplasm. The enzyme catalyses N(6)-dimethylallyladenosine(37) in tRNA + (sulfur carrier)-SH + AH2 + 2 S-adenosyl-L-methionine = 2-methylsulfanyl-N(6)-dimethylallyladenosine(37) in tRNA + (sulfur carrier)-H + 5'-deoxyadenosine + L-methionine + A + S-adenosyl-L-homocysteine + 2 H(+). Catalyzes the methylthiolation of N6-(dimethylallyl)adenosine (i(6)A), leading to the formation of 2-methylthio-N6-(dimethylallyl)adenosine (ms(2)i(6)A) at position 37 in tRNAs that read codons beginning with uridine. This chain is tRNA-2-methylthio-N(6)-dimethylallyladenosine synthase, found in Rhodococcus jostii (strain RHA1).